The following is a 616-amino-acid chain: TAF6-like RNA polymerase II p300/CBP-associated factor-associated factor 65 kDa subunit 6L (616 aa).

Disordered stretches follow at residues 399 to 432 (SLLL…EDPS) and 455 to 539 (FGTG…GTRD). Serine 494 and serine 500 each carry phosphoserine. An asymmetric dimethylarginine mark is found at arginine 549, arginine 555, and arginine 587.

This sequence belongs to the TAF6 family. The PCAF complex is composed of a number of TBP-associated factors (TAFS), such as TAF5, TAF5L, TAF6, TAF6L, TAF9, TAF10 and TAF12, PCAF, and also PCAF-associated factors (PAFs), such as TADA2L/ADA2, TADA3L/ADA3 and SPT3. Component of the STAGA transcription coactivator-HAT complex, at least composed of SUPT3H, GCN5L2, TAF5L, TAF6L, SUPT7L, TADA3L, TAD1L, TAF10, TAF12, TRRAP and TAF9.

It is found in the nucleus. Functions as a component of the PCAF complex. The PCAF complex is capable of efficiently acetylating histones in a nucleosomal context. The PCAF complex could be considered as the human version of the yeast SAGA complex. With TAF5L, acts as an epigenetic regulator essential for somatic reprogramming. Regulates target genes through H3K9ac deposition and MYC recruitment which trigger MYC regulatory network to orchestrate gene expression programs to control embryonic stem cell state. Functions with MYC to activate target gene expression through RNA polymerase II pause release. The protein is TAF6-like RNA polymerase II p300/CBP-associated factor-associated factor 65 kDa subunit 6L of Mus musculus (Mouse).